The chain runs to 597 residues: Elongation factor 4 (597 aa).

The tr-type G domain maps to 2 to 184; sequence DHIRNFSIIA…ALVAKVPPPK (183 aa). GTP-binding positions include 14–19 and 131–134; these read DHGKST and NKID.

This sequence belongs to the TRAFAC class translation factor GTPase superfamily. Classic translation factor GTPase family. LepA subfamily.

It localises to the cell inner membrane. The catalysed reaction is GTP + H2O = GDP + phosphate + H(+). Functionally, required for accurate and efficient protein synthesis under certain stress conditions. May act as a fidelity factor of the translation reaction, by catalyzing a one-codon backward translocation of tRNAs on improperly translocated ribosomes. Back-translocation proceeds from a post-translocation (POST) complex to a pre-translocation (PRE) complex, thus giving elongation factor G a second chance to translocate the tRNAs correctly. Binds to ribosomes in a GTP-dependent manner. The protein is Elongation factor 4 of Paraburkholderia xenovorans (strain LB400).